The following is a 422-amino-acid chain: Probable isoprenylcysteine alpha-carbonyl methylesterase ICMEL2 (422 aa).

A compositionally biased stretch (basic and acidic residues) spans 1–16; sequence MQLSPERCRPMSENRE. A disordered region spans residues 1-55; the sequence is MQLSPERCRPMSENREAWSANSEEMELLHGSNRLSSPEHVRRRVSGNSSEDGSPR. The next 2 helical transmembrane spans lie at 97 to 117 and 152 to 172; these read LLAL…VAYL and VVVF…GSLL. Substrate is bound by residues 158 to 160 and 229 to 231; these read GGA and QSA. Active-site residues include Ser-230, Asp-331, and His-363.

This sequence belongs to the AB hydrolase superfamily. Isoprenylcysteine methylesterase family. As to expression, expressed at low levels in flowers and siliques.

It localises to the endoplasmic reticulum membrane. The protein localises to the golgi apparatus membrane. It carries out the reaction [protein]-C-terminal S-[(2E,6E)-farnesyl]-L-cysteine methyl ester + H2O = [protein]-C-terminal S-[(2E,6E)-farnesyl]-L-cysteine + methanol + H(+). Its function is as follows. Catalyzes the demethylation of isoprenylcysteine methylesters. May act as a negative regulator of ABA signaling. The protein is Probable isoprenylcysteine alpha-carbonyl methylesterase ICMEL2 of Arabidopsis thaliana (Mouse-ear cress).